Consider the following 223-residue polypeptide: Putative NAD(P)H nitroreductase SAB2397c (223 aa).

It belongs to the nitroreductase family. FMN serves as cofactor.

The sequence is that of Putative NAD(P)H nitroreductase SAB2397c from Staphylococcus aureus (strain bovine RF122 / ET3-1).